A 1035-amino-acid chain; its full sequence is Electrogenic sodium bicarbonate cotransporter 1 (1035 aa).

Residues 1–421 are Cytoplasmic-facing; it reads MSSEKECLEN…FASDFYDALS (421 aa). Residues 192–217 show a composition bias toward polar residues; sequence SRLFSTPDNGSPTMTHRNLTSTSLND. Disordered stretches follow at residues 192 to 222 and 348 to 389; these read SRLFSTPDNGSPTMTHRNLTSTSLNDVSDKP and IEPP…GDSE. The segment covering 376-389 has biased composition (basic and acidic residues); it reads APHDDGGGGHGDSE. Residues 422–446 traverse the membrane as a helical segment; the sequence is IQSLSAILFIYLGTVTNAITFGGLL. Topologically, residues 447 to 456 are extracellular; it reads GDATENMQGV. The helical transmembrane segment at 457-475 threads the bilayer; that stretch reads LESFLGTAVSGAVFCLFGG. Residue glutamine 476 is a topological domain, cytoplasmic. The discontinuously helical transmembrane segment at 477-497 threads the bilayer; sequence PLTILSSTGPVLVFERLLFNF. Residues 498-505 are Extracellular-facing; the sequence is SKDNDFDY. A helical membrane pass occupies residues 506–526; the sequence is LEFRLWIGLWSAFQCLILVAT. The Cytoplasmic segment spans residues 527-540; that stretch reads DASFLVKYFTRFTE. Residues 541–564 form a helical membrane-spanning segment; sequence EGFSSLISFIFIYDAFKKMIKLAD. The Extracellular portion of the chain corresponds to 565–648; that stretch reads YYPINSHFKV…GSNCKYVPDI (84 aa). Residues asparagine 591, asparagine 596, asparagine 609, and asparagine 617 are each glycosylated (N-linked (GlcNAc...) asparagine). A helical membrane pass occupies residues 649 to 666; the sequence is TLMSFILFLGTYTCSMAL. Residues 667 to 681 lie on the Cytoplasmic side of the membrane; sequence KKFKTSRYFPTTARK. Residues 682 to 701 form a helical membrane-spanning segment; that stretch reads LISDFAIILSILIFCGLDAL. Over 702–735 the chain is Extracellular; the sequence is LGVDTPKLIVPSEFKPTSPNRGWFVPPFGGNPWW. The chain crosses the membrane as a helical span at residues 736 to 763; that stretch reads VYLAAAIPALLVTILIFMDQQITGVIVN. Over 764–775 the chain is Cytoplasmic; sequence RKEHKLKKGAGY. Residues 776–792 form a helical membrane-spanning segment; it reads HLDLFWVAILMVVCSFM. Alanine 793 is a topological domain (extracellular). A discontinuously helical transmembrane segment spans residues 794-811; that stretch reads LPWYVAATVISIAHIDSL. Residues 812-833 are Cytoplasmic-facing; the sequence is KMETETSAPGEQPKFLGVREQR. The chain crosses the membrane as a helical span at residues 834-850; the sequence is VTGTVVFLLTGLSVFMA. Residues 851 to 857 are Extracellular-facing; it reads PILKFIP. A helical membrane pass occupies residues 858–874; sequence MPVLYGVFLYMGVASLN. Topologically, residues 875–916 are cytoplasmic; that stretch reads GVQFMDRLKLLLMPPKYQPDFIYLRHVPLRRVHLFTFLQVVC. The discontinuously helical intramembrane region spans 917–942; that stretch reads LAMLWILKSTVAAIIFPVMILALVAV. Over 943–1035 the chain is Cytoplasmic; that stretch reads RKAMDYFFSQ…PTFLERHTSC (93 aa). The disordered stretch occupies residues 968–1035; that stretch reads KKKEDEKKKK…PTFLERHTSC (68 aa). Over residues 1007-1035 the composition is skewed to basic and acidic residues; that stretch reads IMEKEPFLIDSKPSDRENSPTFLERHTSC.

It belongs to the anion exchanger (TC 2.A.31) family. As to quaternary structure, homodimer. In terms of tissue distribution, expressed in kidney and to a lower extent in bladder, brain, intestine, large intestine and eye.

It is found in the basolateral cell membrane. It localises to the cell membrane. It catalyses the reaction 2 hydrogencarbonate(out) + Na(+)(out) = 2 hydrogencarbonate(in) + Na(+)(in). The enzyme catalyses 3 hydrogencarbonate(out) + Na(+)(out) = 3 hydrogencarbonate(in) + Na(+)(in). Its function is as follows. Electrogenic sodium/bicarbonate cotransporter with a Na(+):HCO3(-) stoichiometry varying from 1:2 to 1:3. May regulate bicarbonate influx/efflux at the basolateral membrane of cells and regulate intracellular pH. The protein is Electrogenic sodium bicarbonate cotransporter 1 (SLC4A4) of Ambystoma tigrinum (Eastern tiger salamander).